The chain runs to 245 residues: tRNA1(Val) (adenine(37)-N6)-methyltransferase (245 aa).

Belongs to the methyltransferase superfamily. tRNA (adenine-N(6)-)-methyltransferase family.

It is found in the cytoplasm. The enzyme catalyses adenosine(37) in tRNA1(Val) + S-adenosyl-L-methionine = N(6)-methyladenosine(37) in tRNA1(Val) + S-adenosyl-L-homocysteine + H(+). Specifically methylates the adenine in position 37 of tRNA(1)(Val) (anticodon cmo5UAC). This Escherichia coli (strain K12) protein is tRNA1(Val) (adenine(37)-N6)-methyltransferase (yfiC).